A 313-amino-acid chain; its full sequence is Protein FixB (313 aa).

Residue Leu255 to Asp283 coordinates FAD.

It belongs to the ETF alpha-subunit/FixB family. Heterodimer of FixA and FixB.

Its pathway is amine and polyamine metabolism; carnitine metabolism. In terms of biological role, required for anaerobic carnitine reduction. May bring reductant to CaiA. The chain is Protein FixB from Escherichia coli O157:H7.